Here is a 205-residue protein sequence, read N- to C-terminus: Nitrophorin-7 (205 aa).

Residues M1–G20 form the signal peptide. Cystine bridges form between C25–C144 and C62–C193. D52 contributes to the histamine binding site. Residues H80 and N91 each contribute to the heme site. Histamine is bound at residue D154.

The protein belongs to the calycin superfamily. Nitrophorin family. In terms of assembly, forms oligomers (at pH 5.5). The cofactor is heme b. In terms of tissue distribution, expressed in the endothelial cells of the salivary glands.

The protein localises to the secreted. The enzyme catalyses 3 nitrite + 2 H(+) = 2 nitric oxide + nitrate + H2O. Functionally, converts nitrite as the sole substrate to form nitric oxide gas (NO). NO(2-) serves both as an electron donor and as an electron acceptor. Binds to negatively charged cell surfaces of activated platelets; binds to L-a-phosphatidyl-L-serine (PS)-bearing phospholipid membranes. Once bound on an activated platelet, NP7 releases its stored nitric oxide gas (NO) into the victim's tissues while feeding, resulting in vasodilation and inhibition of platelet aggregation. Also acts as an anticoagulant by blocking coagulation-factor binding sites. Has antihistamine activity; binds histamine with high affinity. The polypeptide is Nitrophorin-7 (Rhodnius prolixus (Triatomid bug)).